The following is a 75-amino-acid chain: UPF0352 protein CKO_00587 (75 aa).

Belongs to the UPF0352 family.

In Citrobacter koseri (strain ATCC BAA-895 / CDC 4225-83 / SGSC4696), this protein is UPF0352 protein CKO_00587.